We begin with the raw amino-acid sequence, 383 residues long: 3-ketosteroid-9-alpha-monooxygenase, oxygenase component (383 aa).

The region spanning 24–126 (WHCLGPVKNF…TDVRGGLLFV (103 aa)) is the Rieske domain. Residues cysteine 65, histidine 67, cysteine 84, and histidine 87 each coordinate [2Fe-2S] cluster. Residues asparagine 173, histidine 179, histidine 184, and aspartate 302 each coordinate Fe cation.

As to quaternary structure, homotrimer. The two-component system 3-ketosteroid-9-alpha-monooxygenase is composed of an oxygenase component KshA and a reductase component KshB. The cofactor is [2Fe-2S] cluster. Fe cation is required as a cofactor.

It catalyses the reaction androsta-1,4-diene-3,17-dione + 2 reduced [2Fe-2S]-[ferredoxin] + O2 + 2 H(+) = 9alpha-hydroxyandrosta-1,4-diene-3,17-dione + 2 oxidized [2Fe-2S]-[ferredoxin] + H2O. It participates in lipid metabolism; steroid biosynthesis. Involved in the degradation of cholesterol. Catalyzes the introduction of a 9a-hydroxyl moiety into 1,4-androstadiene-3,17-dione (ADD) to yield the 9alpha-hydroxy-1,4-androstadiene-3,17-dione (9OHADD) intermediate which spontaneously form 3-hydroxy-9,10-seconandrost-1,3,5(10)-triene-9,17-dione (HSA) via the meta-cleavage of ring B with concomitant aromatization of ring A. The chain is 3-ketosteroid-9-alpha-monooxygenase, oxygenase component (kshA) from Mycolicibacterium smegmatis (strain ATCC 700084 / mc(2)155) (Mycobacterium smegmatis).